Consider the following 135-residue polypeptide: Peptide methionine sulfoxide reductase MsrB (135 aa).

Residues 13-135 form the MsrB domain; that stretch reads DADWREQLTP…NGHSMVFEPV (123 aa). Zn(2+)-binding residues include C52, C55, C101, and C104. C124 (nucleophile) is an active-site residue.

This sequence belongs to the MsrB Met sulfoxide reductase family. Zn(2+) serves as cofactor.

It catalyses the reaction L-methionyl-[protein] + [thioredoxin]-disulfide + H2O = L-methionyl-(R)-S-oxide-[protein] + [thioredoxin]-dithiol. The protein is Peptide methionine sulfoxide reductase MsrB of Agrobacterium fabrum (strain C58 / ATCC 33970) (Agrobacterium tumefaciens (strain C58)).